We begin with the raw amino-acid sequence, 286 residues long: MSVLGACITPFKADLSIDFAALESVVRSQEHAGNGIILFGSTGEGLSLTYEEKLSILSFVSTLNLNVPIFVGVTATSVQETMSWIDFAQQWPIDGFLVPTPLYTRPGLNGQKAWFDRILSVSRKPIILYNNPIRTGVSLYPEVVKSFVSHPLCIGVKDSGGSAQACELFAESGLRVFCGDDNLWPDMRLSGASGVISVLANVWPELARDYVAQGRPIEAWKKVCSWLNLSTNPLGIKALMAAQKMIECDAVRPPLSIRDLQRRDELADILACRATLQTELLSVCRQ.

T42 lines the pyruvate pocket. Catalysis depends on Y129, which acts as the Proton donor/acceptor. K157 (schiff-base intermediate with substrate) is an active-site residue. A pyruvate-binding site is contributed by I196.

Belongs to the DapA family. As to quaternary structure, homotetramer; dimer of dimers.

The protein resides in the cytoplasm. It catalyses the reaction L-aspartate 4-semialdehyde + pyruvate = (2S,4S)-4-hydroxy-2,3,4,5-tetrahydrodipicolinate + H2O + H(+). The protein operates within amino-acid biosynthesis; L-lysine biosynthesis via DAP pathway; (S)-tetrahydrodipicolinate from L-aspartate: step 3/4. In terms of biological role, catalyzes the condensation of (S)-aspartate-beta-semialdehyde [(S)-ASA] and pyruvate to 4-hydroxy-tetrahydrodipicolinate (HTPA). This chain is 4-hydroxy-tetrahydrodipicolinate synthase, found in Chlamydia trachomatis serovar A (strain ATCC VR-571B / DSM 19440 / HAR-13).